Here is a 356-residue protein sequence, read N- to C-terminus: Tyrosine recombinase XerS (356 aa).

A Core-binding (CB) domain is found at 16 to 121 (IMPWYVLEYY…ALSSLYKYLT (106 aa)). In terms of domain architecture, Tyr recombinase spans 169–354 (GFLTYIDQEY…VNDEQKNALD (186 aa)). Catalysis depends on residues R210, K234, H306, R309, and H332. Y341 acts as the O-(3'-phospho-DNA)-tyrosine intermediate in catalysis.

Belongs to the 'phage' integrase family. XerS subfamily.

Its subcellular location is the cytoplasm. Its activity is regulated as follows. FtsK is required for recombination. Site-specific tyrosine recombinase, which acts by catalyzing the cutting and rejoining of the recombining DNA molecules. Essential to convert dimers of the bacterial chromosome into monomers to permit their segregation at cell division. This chain is Tyrosine recombinase XerS, found in Streptococcus pneumoniae (strain Hungary19A-6).